Consider the following 412-residue polypeptide: 8-amino-7-oxononanoate synthase (412 aa).

106-107 lines the pyridoxal 5'-phosphate pocket; the sequence is GY. A substrate-binding site is contributed by His-131. Pyridoxal 5'-phosphate is bound by residues Ser-187, His-219, and Thr-247. N6-(pyridoxal phosphate)lysine is present on Lys-250. Thr-370 is a substrate binding site.

This sequence belongs to the class-II pyridoxal-phosphate-dependent aminotransferase family. BioF subfamily. As to quaternary structure, homodimer. The cofactor is pyridoxal 5'-phosphate.

The catalysed reaction is 6-carboxyhexanoyl-[ACP] + L-alanine + H(+) = (8S)-8-amino-7-oxononanoate + holo-[ACP] + CO2. Its pathway is cofactor biosynthesis; biotin biosynthesis. 8-amino-7-oxononanoate synthase; part of the cluster involved in the biosynthesis of biotin (also known as vitamin B8 or vitamin H), a water-soluble vitamin that functions as a prosthetic group of many carboxylases, such as acetyl-CoA carboxylase and pyruvate carboxylase. Catalyzes the decarboxylative condensation of pimeloyl-[acyl-carrier protein] and L-alanine to produce 8-amino-7-oxononanoate (AON). The protein is 8-amino-7-oxononanoate synthase of Emericella nidulans (strain FGSC A4 / ATCC 38163 / CBS 112.46 / NRRL 194 / M139) (Aspergillus nidulans).